A 265-amino-acid chain; its full sequence is MSAHQARKRFGQHFLTDESVVESIVRAIGPARDDRVVEIGPGLSALTRPLLDRIDHLTAVEIDRDLAARLRRQYPAERLTVVEADALTVDFAQFGQGLRVVGNLPYNISSPLLFHLMGAAEQVRDQHFMLQREVIDRMVAEPGSGDYSRLSVMLQARYRMEKLFDVAPEAFDPPPRVVSAVVRMAPLPADRLRPASDAAFETVVARAFSQRRKMLRRVLGDWAALTPWDELGIAPTARAEEVGVAQFIGLADALLAAGAPGLARP.

S-adenosyl-L-methionine contacts are provided by His13, Leu15, Gly40, Glu61, Asp85, and Asn103.

It belongs to the class I-like SAM-binding methyltransferase superfamily. rRNA adenine N(6)-methyltransferase family. RsmA subfamily.

It localises to the cytoplasm. It catalyses the reaction adenosine(1518)/adenosine(1519) in 16S rRNA + 4 S-adenosyl-L-methionine = N(6)-dimethyladenosine(1518)/N(6)-dimethyladenosine(1519) in 16S rRNA + 4 S-adenosyl-L-homocysteine + 4 H(+). In terms of biological role, specifically dimethylates two adjacent adenosines (A1518 and A1519) in the loop of a conserved hairpin near the 3'-end of 16S rRNA in the 30S particle. May play a critical role in biogenesis of 30S subunits. The polypeptide is Ribosomal RNA small subunit methyltransferase A (Bordetella bronchiseptica (strain ATCC BAA-588 / NCTC 13252 / RB50) (Alcaligenes bronchisepticus)).